We begin with the raw amino-acid sequence, 294 residues long: NAD kinase (294 aa).

The Proton acceptor role is filled by D73. NAD(+) is bound by residues 73 to 74, 147 to 148, R175, D177, and 188 to 193; these read DG, ND, and TAYALS.

It belongs to the NAD kinase family. A divalent metal cation is required as a cofactor.

The protein localises to the cytoplasm. It catalyses the reaction NAD(+) + ATP = ADP + NADP(+) + H(+). Its function is as follows. Involved in the regulation of the intracellular balance of NAD and NADP, and is a key enzyme in the biosynthesis of NADP. Catalyzes specifically the phosphorylation on 2'-hydroxyl of the adenosine moiety of NAD to yield NADP. This is NAD kinase from Nitrosospira multiformis (strain ATCC 25196 / NCIMB 11849 / C 71).